A 591-amino-acid chain; its full sequence is CTP synthase 1-A (591 aa).

The region spanning 300-554 (SIALVGKYTK…LASVGRLSQY (255 aa)) is the Glutamine amidotransferase type-1 domain. Active-site for GATase activity residues include C399, H526, and E528.

It belongs to the CTP synthase family.

It carries out the reaction UTP + L-glutamine + ATP + H2O = CTP + L-glutamate + ADP + phosphate + 2 H(+). The protein operates within pyrimidine metabolism; CTP biosynthesis via de novo pathway; CTP from UDP: step 2/2. This enzyme is involved in the de novo synthesis of CTP, a precursor of DNA, RNA and phospholipids. Catalyzes the ATP-dependent amination of UTP to CTP with either L-glutamine or ammonia as a source of nitrogen. This Xenopus laevis (African clawed frog) protein is CTP synthase 1-A (ctps1-a).